A 295-amino-acid polypeptide reads, in one-letter code: Protein LplC (295 aa).

6 helical membrane passes run 21 to 41, 81 to 101, 116 to 136, 142 to 162, 199 to 219, and 260 to 280; these read ILFL…IIAG, VSIF…FTMA, LNLV…YLVV, LDTY…LIII, VIAT…FHAL, and GIKL…YPFL. The region spanning 79–280 is the ABC transmembrane type-1 domain; it reads MGVSIFITVV…LPILAVYPFL (202 aa).

Belongs to the binding-protein-dependent transport system permease family. CysTW subfamily.

Its subcellular location is the cell membrane. The protein is Protein LplC (lplC) of Bacillus subtilis (strain 168).